Here is a 235-residue protein sequence, read N- to C-terminus: Nitrile hydratase subunit beta (235 aa).

It belongs to the nitrile hydratase subunit beta family. In terms of assembly, heterodimer of an alpha and a beta chain.

It carries out the reaction an aliphatic primary amide = an aliphatic nitrile + H2O. Its function is as follows. NHase catalyzes the hydration of various nitrile compounds to the corresponding amides. This Rhodococcus sp protein is Nitrile hydratase subunit beta (nthB).